The primary structure comprises 72 residues: Prokaryotic ubiquitin-like protein Pup (72 aa).

Residues 1-10 (MATRDSGGGQ) show a composition bias toward gly residues. Residues 1–41 (MATRDSGGGQQHTNRHADEVEEVAAEGNDASDLKERHEKLS) form a disordered region. The stretch at 21–61 (EEVAAEGNDASDLKERHEKLSEDVDSLLDEIDDVLEENAEE) forms a coiled coil. Residues 28–66 (NDASDLKERHEKLSEDVDSLLDEIDDVLEENAEEFVKGY) are ARC ATPase binding. The segment covering 31 to 41 (SDLKERHEKLS) has biased composition (basic and acidic residues). Glutamate 72 participates in a covalent cross-link: Isoglutamyl lysine isopeptide (Glu-Lys) (interchain with K-? in acceptor proteins).

The protein belongs to the prokaryotic ubiquitin-like protein family. Strongly interacts with the proteasome-associated ATPase ARC through a hydrophobic interface; the interacting region of Pup lies in its C-terminal half. There is one Pup binding site per ARC hexamer ring.

It participates in protein degradation; proteasomal Pup-dependent pathway. Protein modifier that is covalently attached to lysine residues of substrate proteins, thereby targeting them for proteasomal degradation. The tagging system is termed pupylation. In Frankia alni (strain DSM 45986 / CECT 9034 / ACN14a), this protein is Prokaryotic ubiquitin-like protein Pup.